Here is a 286-residue protein sequence, read N- to C-terminus: MASGKEIKGKIASVQSTKKITRAMEMVAASKMRKAQERMTASKPYASRMRQVVAHLANADLEYRHVYLQEREVKNVGYIVVSSDRGLCGGLNVNLLKNVVKSAKAWEEKGAKTSYCVVGSKGMSFFKSVGGNVEANITGLGDTPHLNDLIGSIKVMLDAYESGAIDRLYIVYNEFVNTMTQSPKNIQLLPLEAGSDEELKRHWDYIYEPAPKELLDELLVRFIESQVYQGVVENNACEQAARMIAMKAASDNAGDIIRDLQLVYNKARQAAITQEISEIVGGAAAV.

It belongs to the ATPase gamma chain family. In terms of assembly, F-type ATPases have 2 components, CF(1) - the catalytic core - and CF(0) - the membrane proton channel. CF(1) has five subunits: alpha(3), beta(3), gamma(1), delta(1), epsilon(1). CF(0) has three main subunits: a, b and c.

It localises to the cell inner membrane. Its function is as follows. Produces ATP from ADP in the presence of a proton gradient across the membrane. The gamma chain is believed to be important in regulating ATPase activity and the flow of protons through the CF(0) complex. The polypeptide is ATP synthase gamma chain (Alcanivorax borkumensis (strain ATCC 700651 / DSM 11573 / NCIMB 13689 / SK2)).